The following is a 159-amino-acid chain: Ribosome maturation factor RimP (159 aa).

This sequence belongs to the RimP family.

It is found in the cytoplasm. Functionally, required for maturation of 30S ribosomal subunits. This Geobacter sulfurreducens (strain ATCC 51573 / DSM 12127 / PCA) protein is Ribosome maturation factor RimP.